Here is a 421-residue protein sequence, read N- to C-terminus: Protein PHLOEM UNLOADING MODULATOR (421 aa).

Transmembrane regions (helical) follow at residues 30–50 (LMPV…LFYK), 60–80 (IPFL…ALCV), 124–144 (HIIG…SVVF), 158–178 (YIFT…STIL), 286–306 (AMAW…LFVA), 323–343 (CIVA…IWSA), and 397–417 (TVFA…ALTL).

It belongs to the sphingomyelin synthase family.

Its subcellular location is the membrane. Its pathway is sphingolipid metabolism. Functionally, catalyzes the biosynthesis of sphingolipids with very long-chain fatty acid (VLCFA). Required for the formation of plasmodesmal cytoplasmic sleeve during the transition from type I to type II plasmodesmata to modulate post-sieve elements (SE) unloading and symplastic cell-to-cell molecular trafficking at the phloem pole pericycle (PPP)-endodermis interface in roots. This Arabidopsis thaliana (Mouse-ear cress) protein is Protein PHLOEM UNLOADING MODULATOR.